Consider the following 117-residue polypeptide: Large ribosomal subunit protein eL34 (117 aa).

This sequence belongs to the eukaryotic ribosomal protein eL34 family. As to quaternary structure, component of the large ribosomal subunit.

It localises to the cytoplasm. It is found in the cytosol. The protein resides in the endoplasmic reticulum. Component of the large ribosomal subunit. The ribosome is a large ribonucleoprotein complex responsible for the synthesis of proteins in the cell. The chain is Large ribosomal subunit protein eL34 (rpl34) from Ictalurus punctatus (Channel catfish).